Reading from the N-terminus, the 419-residue chain is UDP-N-acetylglucosamine 1-carboxyvinyltransferase (419 aa).

Lysine 22 to asparagine 23 is a phosphoenolpyruvate binding site. Arginine 91 provides a ligand contact to UDP-N-acetyl-alpha-D-glucosamine. The Proton donor role is filled by cysteine 115. Cysteine 115 bears the 2-(S-cysteinyl)pyruvic acid O-phosphothioketal mark. UDP-N-acetyl-alpha-D-glucosamine contacts are provided by residues arginine 120–leucine 124, lysine 160–valine 163, aspartate 305, and valine 327.

The protein belongs to the EPSP synthase family. MurA subfamily.

It is found in the cytoplasm. It carries out the reaction phosphoenolpyruvate + UDP-N-acetyl-alpha-D-glucosamine = UDP-N-acetyl-3-O-(1-carboxyvinyl)-alpha-D-glucosamine + phosphate. The protein operates within cell wall biogenesis; peptidoglycan biosynthesis. In terms of biological role, cell wall formation. Adds enolpyruvyl to UDP-N-acetylglucosamine. This is UDP-N-acetylglucosamine 1-carboxyvinyltransferase from Salmonella schwarzengrund (strain CVM19633).